Consider the following 493-residue polypeptide: Malonyl-CoA decarboxylase, mitochondrial (493 aa).

The transit peptide at 1–39 directs the protein to the mitochondrion; it reads MRGFGPGLTARRLLPLRLPPRPPGPRLASGQAAGALERA. Positions 40–190 are alpha-helical domain; the sequence is MDELLRRAVP…VLKGMLSEWF (151 aa). An N6-acetyllysine modification is found at Lys59. N6-acetyllysine; alternate is present on Lys168. Lys168 carries the N6-succinyllysine; alternate modification. Residues 191–493 form a catalytic domain region; the sequence is SSGFLNLERV…VAQFQKNSKL (303 aa). An N6-acetyllysine modification is found at Lys211. Position 222 is an N6-succinyllysine (Lys222). Malonyl-CoA is bound by residues 299–305 and Ser329; that span reads QGVELGT. Ser329 (proton acceptor) is an active-site residue. N6-acetyllysine is present on Lys389. His423 lines the malonyl-CoA pocket. The Proton donor role is filled by His423. Lys472 bears the N6-acetyllysine mark. The Microbody targeting signal signature appears at 491 to 493; it reads SKL.

Homotetramer. Dimer of dimers. The two subunits within a dimer display conformational differences suggesting that at any given moment, only one of the two subunits is competent for malonyl-CoA binding and catalytic activity. Under oxidizing conditions, can form disulfide-linked homotetramers (in vitro). Associates with the peroxisomal targeting signal receptor PEX5. Post-translationally, acetylation at Lys-472 activates malonyl-CoA decarboxylase activity. Deacetylation at Lys-472 by SIRT4 represses activity, leading to promote lipogenesis. Interchain disulfide bonds may form in peroxisomes (Potential). Interchain disulfide bonds are not expected to form in the reducing environment of the cytoplasm and mitochondria. As to expression, expressed in fibroblasts and hepatoblastoma cells (at protein level). Expressed strongly in heart, liver, skeletal muscle, kidney and pancreas. Expressed in myotubes. Expressed weakly in brain, placenta, spleen, thymus, testis, ovary and small intestine.

Its subcellular location is the cytoplasm. The protein resides in the mitochondrion matrix. It is found in the peroxisome. The protein localises to the peroxisome matrix. The enzyme catalyses malonyl-CoA + H(+) = acetyl-CoA + CO2. It participates in metabolic intermediate biosynthesis; acetyl-CoA biosynthesis; acetyl-CoA from malonyl-CoA: step 1/1. With respect to regulation, malonyl-CoA decarboxylase activity does not require any cofactors or divalent metal ions. Formation of interchain disulfide bonds leads to positive cooperativity between active sites and increases the affinity for malonyl-CoA and the catalytic efficiency (in vitro). In terms of biological role, catalyzes the conversion of malonyl-CoA to acetyl-CoA. In the fatty acid biosynthesis MCD selectively removes malonyl-CoA and thus assures that methyl-malonyl-CoA is the only chain elongating substrate for fatty acid synthase and that fatty acids with multiple methyl side chains are produced. In peroxisomes it may be involved in degrading intraperoxisomal malonyl-CoA, which is generated by the peroxisomal beta-oxidation of odd chain-length dicarboxylic fatty acids. Plays a role in the metabolic balance between glucose and lipid oxidation in muscle independent of alterations in insulin signaling. May play a role in controlling the extent of ischemic injury by promoting glucose oxidation. This is Malonyl-CoA decarboxylase, mitochondrial from Homo sapiens (Human).